The following is a 149-amino-acid chain: 3-hydroxyacyl-[acyl-carrier-protein] dehydratase FabZ (149 aa).

Residue His52 is part of the active site.

The protein belongs to the thioester dehydratase family. FabZ subfamily.

Its subcellular location is the cytoplasm. It carries out the reaction a (3R)-hydroxyacyl-[ACP] = a (2E)-enoyl-[ACP] + H2O. In terms of biological role, involved in unsaturated fatty acids biosynthesis. Catalyzes the dehydration of short chain beta-hydroxyacyl-ACPs and long chain saturated and unsaturated beta-hydroxyacyl-ACPs. This is 3-hydroxyacyl-[acyl-carrier-protein] dehydratase FabZ from Cupriavidus necator (strain ATCC 17699 / DSM 428 / KCTC 22496 / NCIMB 10442 / H16 / Stanier 337) (Ralstonia eutropha).